Reading from the N-terminus, the 475-residue chain is Ribulose bisphosphate carboxylase large chain (475 aa).

Positions 1-2 are excised as a propeptide; the sequence is MS. Residue proline 3 is modified to N-acetylproline. Lysine 14 bears the N6,N6,N6-trimethyllysine mark. Residues asparagine 123 and threonine 173 each coordinate substrate. The active-site Proton acceptor is lysine 175. Substrate is bound at residue lysine 177. Mg(2+) contacts are provided by lysine 201, aspartate 203, and glutamate 204. The residue at position 201 (lysine 201) is an N6-carboxylysine. Histidine 294 (proton acceptor) is an active-site residue. Residues arginine 295, histidine 327, and serine 379 each coordinate substrate.

The protein belongs to the RuBisCO large chain family. Type I subfamily. As to quaternary structure, heterohexadecamer of 8 large chains and 8 small chains; disulfide-linked. The disulfide link is formed within the large subunit homodimers. Requires Mg(2+) as cofactor. The disulfide bond which can form in the large chain dimeric partners within the hexadecamer appears to be associated with oxidative stress and protein turnover.

Its subcellular location is the plastid. It localises to the chloroplast. The catalysed reaction is 2 (2R)-3-phosphoglycerate + 2 H(+) = D-ribulose 1,5-bisphosphate + CO2 + H2O. It carries out the reaction D-ribulose 1,5-bisphosphate + O2 = 2-phosphoglycolate + (2R)-3-phosphoglycerate + 2 H(+). Functionally, ruBisCO catalyzes two reactions: the carboxylation of D-ribulose 1,5-bisphosphate, the primary event in carbon dioxide fixation, as well as the oxidative fragmentation of the pentose substrate in the photorespiration process. Both reactions occur simultaneously and in competition at the same active site. The chain is Ribulose bisphosphate carboxylase large chain from Viscum album (European mistletoe).